The primary structure comprises 582 residues: Probable inorganic phosphate transporter 1-9 (582 aa).

The Cytoplasmic segment spans residues 1-23; that stretch reads MAPRIRVLAALDQARTQYYHFKA. The helical transmembrane segment at 24-44 threads the bilayer; the sequence is IVIAGMGLFTDSYDLFCISPV. Residues 45-75 lie on the Extracellular side of the membrane; it reads MKIFGRVYYAPSGSVDGSGSGPGVTPPAVVS. A helical transmembrane segment spans residues 76–96; the sequence is ATVGVALLGAVAGNVVFGALG. Over 97-103 the chain is Cytoplasmic; the sequence is DRVGRRR. A helical membrane pass occupies residues 104–124; the sequence is VYGACLLLMVCSSVGSGLSVC. Over 125–130 the chain is Extracellular; that stretch reads RTRRCA. Residues 131-151 form a helical membrane-spanning segment; that stretch reads LASLCFFRFLLGVGVGGDYPL. Residues 152 to 165 lie on the Cytoplasmic side of the membrane; sequence SATIMSEFANRRTR. Residues 166–186 form a helical membrane-spanning segment; that stretch reads GAFIAAVFSMQGFGILVSSAV. At 187–210 the chain is on the extracellular side; the sequence is TMAVAAAFDHYTGYPAPLDTPECA. Residues 211-231 form a helical membrane-spanning segment; that stretch reads DLAWRIILMAGAVPAALTYYW. Residues 232–307 lie on the Cytoplasmic side of the membrane; it reads RMSMPETARY…RRFVRQHGRD (76 aa). A helical transmembrane segment spans residues 308–328; that stretch reads LFACAAAWFLLDIPYYSSTLF. The Extracellular portion of the chain corresponds to 329–354; that stretch reads QSQIYRPWFPPAAKVNAFQEAFNVAK. The chain crosses the membrane as a helical span at residues 355 to 375; sequence FQAVIAVASTIPGYFAAMLLI. Residues 376 to 385 lie on the Cytoplasmic side of the membrane; it reads ERAGRRRLQM. Residues 386–406 traverse the membrane as a helical segment; the sequence is AGFLLMAVFLFALAGPYDGYW. Residues 407-415 lie on the Extracellular side of the membrane; the sequence is RDHAKTAGY. The helical transmembrane segment at 416–436 threads the bilayer; sequence IVLYSLTFFSANLGPNTTTFI. The Cytoplasmic portion of the chain corresponds to 437-451; sequence LPAELFPARFRSTCH. The helical transmembrane segment at 452–472 threads the bilayer; it reads GLSGAAGKLGALVGSIGFLWA. At 473–485 the chain is on the extracellular side; the sequence is SQQKDGAAAGHLP. A helical membrane pass occupies residues 486-506; that stretch reads GIGMMYALFVLGGICLLGLAL. Residues 507 to 582 lie on the Cytoplasmic side of the membrane; sequence TYAFTPETMT…SPILPHRMSL (76 aa). A disordered region spans residues 519–541; that stretch reads LEENESSVQAQSQVGDGGSDAGN.

This sequence belongs to the major facilitator superfamily. Phosphate:H(+) symporter (TC 2.A.1.9) family. Expressed at low levels in roots.

It is found in the membrane. In terms of biological role, high-affinity transporter for external inorganic phosphate. The polypeptide is Probable inorganic phosphate transporter 1-9 (PHT1-9) (Oryza sativa subsp. japonica (Rice)).